The sequence spans 62 residues: Large ribosomal subunit protein bL28 (62 aa).

Belongs to the bacterial ribosomal protein bL28 family.

The protein is Large ribosomal subunit protein bL28 of Staphylococcus haemolyticus (strain JCSC1435).